Consider the following 533-residue polypeptide: Calcitonin receptor (533 aa).

The N-terminal stretch at 1–41 (MTPRRSRVKRRNLRKPKMRFLLVNRFTLLLLLLVSPTPVLQ) is a signal peptide. The Extracellular portion of the chain corresponds to 42–163 (APTNLTDSGL…FTSEKLQNAY (122 aa)). N-linked (GlcNAc...) asparagine glycosylation is found at N45, N90, N142, and N147. Disulfide bonds link C72/C98, C89/C129, and C112/C151. A helical membrane pass occupies residues 164 to 186 (VLYYLALVGHSLSIAALVASMLI). Topologically, residues 187–198 (FWIFKNLSCQRV) are cytoplasmic. The chain crosses the membrane as a helical span at residues 199–219 (TLHKHMFLTYILNSIIIIIHL). The Extracellular segment spans residues 220-273 (VEVVPNGDLVRRDPMHIFHHNTHMWTMQWELSPPLPLSAHEGKMDPHASEVISC). A disulfide bridge connects residues C273 and C343. The helical transmembrane segment at 274–296 (KVLHFLHQYMMSCNYFWMLCEGI) threads the bilayer. Residues 297-313 (YLHTLIVMAVFTDEQRL) are Cytoplasmic-facing. Residues 314–334 (RWYYLLGWGFPIVPTIIHAIT) traverse the membrane as a helical segment. Topologically, residues 335–350 (RALYYNDNCWLSAETH) are extracellular. The chain crosses the membrane as a helical span at residues 351–374 (LLYIIHGPVMVALVVNFFFLLNIV). Residues 375–394 (RVLVTKMRQTHEAESYMYLK) are Cytoplasmic-facing. A helical transmembrane segment spans residues 395-413 (AVKATMVLVPLLGIQFVVF). At 414-421 (PWRPSNKV) the chain is on the extracellular side. A helical membrane pass occupies residues 422–448 (LGKIYDYLMHSLIHFQGFFVATIYCFC). Residues 449–533 (NHEVQVTLKR…MNVIQQDASA (85 aa)) lie on the Cytoplasmic side of the membrane.

It belongs to the G-protein coupled receptor 2 family. Heterodimer of CALCR and RAMP1, RAMP2 or RAMP3; the receptor complexes function as AMYR1, AMYR2 and AMYR3 receptors, respectively, and respond to amylin/IAPP, calcitonin/CT and CGRP1 ligands. Interacts with GPRASP2.

It localises to the cell membrane. Functionally, g protein-coupled receptor activated by ligand peptides amylin (IAPP), calcitonin (CT/CALCA) and calcitonin gene-related peptide type 1 (CGRP1/CALCA). CALCR interacts with receptor-activity-modifying proteins RAMP1, 2 and 3 to form receptor complexes AMYR1, 2 and 3, respectively. IAPP, CT and CGRP1 activate CALCR and AMYRs with distinct modes of receptor activation resulting in specific phenotypes. Ligand binding causes a conformation change that triggers signaling via guanine nucleotide-binding proteins (G proteins) and modulates the activity of downstream effectors. Activates cAMP-dependent pathway. In Mus musculus (Mouse), this protein is Calcitonin receptor.